The primary structure comprises 275 residues: Lincomycin biosynthesis protein LmbN (275 aa).

The Carrier domain occupies 1 to 78 (MSTLDEVLAL…AIAATVARIT (78 aa)). S37 bears the O-(pantetheine 4'-phosphoryl)serine mark. Residues 113 to 275 (LFDTWHAGGT…HHALCVAHAP (163 aa)) enclose the SIS domain.

It functions in the pathway antibiotic biosynthesis; lincomycin biosynthesis. The protein is Lincomycin biosynthesis protein LmbN (lmbN) of Streptomyces lincolnensis.